Consider the following 915-residue polypeptide: Pentatricopeptide repeat-containing protein At5g65560 (915 aa).

PPR repeat units lie at residues 182-216 (IIGC…KVCP), 217-251 (NIYT…GLDP), 252-286 (DFFT…GCRR), 287-321 (NEVA…ECFP), 322-356 (TVRT…GIKP), 357-391 (NIHT…GLMP), 392-426 (NVIT…KLSP), 427-460 (NTRT…KVLP), 461-495 (DVVT…GLVP), 496-530 (DQWT…GVNP), 531-565 (NVVM…NCLP), 566-600 (NSLT…GLQP), 601-635 (TVST…GTKP), 636-670 (DAHT…GVSP), 671-705 (DLFT…GCEP), 724-758 (KQKG…SVTP), 759-794 (NAKS…GISP), 795-829 (SELV…GHLP), 830-864 (QLES…GYYE), and 865-899 (DELA…GCKF).

Belongs to the PPR family. P subfamily.

This chain is Pentatricopeptide repeat-containing protein At5g65560, found in Arabidopsis thaliana (Mouse-ear cress).